Consider the following 1224-residue polypeptide: Coatomer subunit alpha (1224 aa).

4 WD repeats span residues 7-37, 49-79, 91-121, and 133-163; these read TKSARVKGLSFHPKRPWILTSLHNGVIQLWD, EHDGPVRGIDFHKQQPLFVSGGDDYKIKVWN, GHLDYIRTTFFHHEYPWILSASDDQTIRVWN, and GHNHYVMCAQFHPSEDLVVSASLDQTVRVWD. The residue at position 173 (Ser173) is a Phosphoserine. Position 185 is a phosphothreonine (Thr185). WD repeat units follow at residues 203-233 and 247-277; these read GHDRGVNWAAFHPTMPLIVSGADDRQVKIWR and GHYNNVSCAVFHPRQELILSNSEDKSIRVWD. Phosphothreonine is present on Thr591. Arg965 carries the post-translational modification Omega-N-methylarginine. Ser1193 is subject to Phosphoserine.

In terms of assembly, oligomeric complex that consists of at least the alpha, beta, beta', gamma, delta, epsilon and zeta subunits. Interacts with SCYL1. Interacts with JAGN1. Interacts with TMEM41B. Interacts with SVEP1. Probably interacts with PEX11A.

It is found in the cytoplasm. Its subcellular location is the golgi apparatus membrane. The protein resides in the cytoplasmic vesicle. The protein localises to the COPI-coated vesicle membrane. It localises to the secreted. In terms of biological role, the coatomer is a cytosolic protein complex that binds to dilysine motifs and reversibly associates with Golgi non-clathrin-coated vesicles, which further mediate biosynthetic protein transport from the ER, via the Golgi up to the trans Golgi network. Coatomer complex is required for budding from Golgi membranes, and is essential for the retrograde Golgi-to-ER transport of dilysine-tagged proteins. In mammals, the coatomer can only be recruited by membranes associated to ADP-ribosylation factors (ARFs), which are small GTP-binding proteins; the complex also influences the Golgi structural integrity, as well as the processing, activity, and endocytic recycling of LDL receptors. Xenin stimulates exocrine pancreatic secretion. It inhibits pentagastrin-stimulated secretion of acid, to induce exocrine pancreatic secretion and to affect small and large intestinal motility. In the gut, xenin interacts with the neurotensin receptor. This is Coatomer subunit alpha (COPA) from Bos taurus (Bovine).